The following is a 237-amino-acid chain: Bax inhibitor 1 (237 aa).

Topologically, residues 1-29 (MNIFDRKINFDALLKFSHITPSTQQHLKK) are cytoplasmic. Lys7 is covalently cross-linked (Glycyl lysine isopeptide (Lys-Gly) (interchain with G-Cter in ubiquitin)). Residues 30–50 (VYASFALCMFVAAAGAYVHVV) form a helical membrane-spanning segment. Residues 51–52 (TR) are Lumenal-facing. Residues 53 to 73 (FIQAGLLSALGSLGLMIWLMA) form a helical membrane-spanning segment. Residues 74–86 (TPHSHETEQKRLG) are Cytoplasmic-facing. A helical transmembrane segment spans residues 87 to 107 (LLAGFAFLTGVGLGPALDLCI). Residues 108-112 (AINPS) lie on the Lumenal side of the membrane. Residues 113–133 (ILPTAFMGTAMIFTCFTLSAL) form a helical membrane-spanning segment. Topologically, residues 134-139 (YARRRS) are cytoplasmic. The helical transmembrane segment at 140-160 (YLFLGGILMSAMSLMVLSSLG) threads the bilayer. Topologically, residues 161–166 (NLFFGS) are lumenal. The chain crosses the membrane as a helical span at residues 167–187 (IWLFQANLYVGLVVMCGFVLF). Over 188–206 (DTQLIIEKAENGDKDYIWH) the chain is Cytoplasmic. Residues 207-227 (CVDLFSDFVTLFRKLMMILAM) constitute an intramembrane region (helical). At 228–237 (NEKDKKKEKK) the chain is on the cytoplasmic side.

The protein belongs to the BI1 family. In terms of assembly, interacts with BCL2 and BCL2L1. Interacts with ERN1. Ubiquitinated by BFAR, leading to proteasomal degradation.

It is found in the endoplasmic reticulum membrane. Endoplasmic reticulum (ER)-resident protein that confers cellular protection as an anti-apoptotic protein by limiting multiple stress-inducing pathways surrounding the endoplasmic reticulum and mitochondria. Inhibits the activities of the key sensor for the endoplasmic reticulum unfolded protein response IRE1alpha/ERN1 both directly and by blocking BAX/BAK binding. Modulates ER calcium homeostasis by acting as a calcium-leak channel. Negatively regulates autophagy and autophagosome formation, especially during periods of nutrient deprivation, and reduces cell survival during starvation. This chain is Bax inhibitor 1 (TMBIM6), found in Sus scrofa (Pig).